A 280-amino-acid polypeptide reads, in one-letter code: UPF0494 membrane protein SPAC212.01c (280 aa).

Helical transmembrane passes span 107 to 127, 144 to 164, 178 to 198, and 199 to 219; these read WPLLIIWSIIIVFAVDKKFEV, IWVPIAIYVCLLVLMLLSLIF, VIIAVLGAVLGMIIAVLGMII, and AALGMIIAALGATITGLLYFG.

The protein belongs to the UPF0494 family.

It is found in the membrane. The polypeptide is UPF0494 membrane protein SPAC212.01c (Schizosaccharomyces pombe (strain 972 / ATCC 24843) (Fission yeast)).